The following is a 270-amino-acid chain: Energy-coupling factor transporter transmembrane protein EcfT (270 aa).

Helical transmembrane passes span 36 to 56, 72 to 92, 108 to 128, and 248 to 268; these read LFIV…LISI, PIFI…GGAN, LIMA…TSLL, and FIAS…RIWW.

Belongs to the energy-coupling factor EcfT family. As to quaternary structure, forms a stable energy-coupling factor (ECF) transporter complex composed of 2 membrane-embedded substrate-binding proteins (S component), 2 ATP-binding proteins (A component) and 2 transmembrane proteins (T component). May be able to interact with more than 1 S component at a time.

It localises to the cell membrane. Its function is as follows. Transmembrane (T) component of an energy-coupling factor (ECF) ABC-transporter complex. Unlike classic ABC transporters this ECF transporter provides the energy necessary to transport a number of different substrates. This chain is Energy-coupling factor transporter transmembrane protein EcfT, found in Clostridium kluyveri (strain ATCC 8527 / DSM 555 / NBRC 12016 / NCIMB 10680 / K1).